The primary structure comprises 462 residues: 3-isopropylmalate dehydratase large subunit (462 aa).

Residues Cys337, Cys397, and Cys400 each contribute to the [4Fe-4S] cluster site.

This sequence belongs to the aconitase/IPM isomerase family. LeuC type 1 subfamily. In terms of assembly, heterodimer of LeuC and LeuD. The cofactor is [4Fe-4S] cluster.

It carries out the reaction (2R,3S)-3-isopropylmalate = (2S)-2-isopropylmalate. Its pathway is amino-acid biosynthesis; L-leucine biosynthesis; L-leucine from 3-methyl-2-oxobutanoate: step 2/4. Functionally, catalyzes the isomerization between 2-isopropylmalate and 3-isopropylmalate, via the formation of 2-isopropylmaleate. This chain is 3-isopropylmalate dehydratase large subunit, found in Listeria monocytogenes serovar 1/2a (strain ATCC BAA-679 / EGD-e).